Reading from the N-terminus, the 362-residue chain is E3 ubiquitin-protein ligase TM129 (362 aa).

Residues 1–6 (MESPAV) lie on the Lumenal side of the membrane. The helical transmembrane segment at 7–27 (TFTLAYVVFSVCFVFTPNEFH) threads the bilayer. Over 28–56 (SAGITVQNLLSGWLGSEDVAFVHYHIRRS) the chain is Cytoplasmic. A helical transmembrane segment spans residues 57–77 (SATLLAHSLLPMGYFIGMCFA). At 78–94 (APEKELYNVHKAADGWK) the chain is on the lumenal side. Residues 95–115 (VFVLMAVLLPIATSILAFYWS) form a helical membrane-spanning segment. Over 116 to 362 (QKRWSNHPLA…FCIVDVCIVR (247 aa)) the chain is Cytoplasmic. The RING-type; degenerate zinc finger occupies 285 to 350 (CIGCMQTNAN…SSQVPCPTCR (66 aa)).

It belongs to the TMEM129 family. As to quaternary structure, integral component of ER-resident dislocation complexes.

It is found in the endoplasmic reticulum membrane. The catalysed reaction is S-ubiquitinyl-[E2 ubiquitin-conjugating enzyme]-L-cysteine + [acceptor protein]-L-lysine = [E2 ubiquitin-conjugating enzyme]-L-cysteine + N(6)-ubiquitinyl-[acceptor protein]-L-lysine.. Its pathway is protein modification; protein ubiquitination. In terms of biological role, E3 ubiquitin-protein ligase involved in ER-associated protein degradation, preferentially associates with the E2 enzyme UBE2J2. This Xenopus laevis (African clawed frog) protein is E3 ubiquitin-protein ligase TM129 (tmem129).